We begin with the raw amino-acid sequence, 229 residues long: Clathrin light chain B (229 aa).

Low complexity-rich tracts occupy residues 1 to 17 and 45 to 58; these read MAEDFGFFSSSESGAPE and GAPAASQVASAQPG. The segment at 1–80 is disordered; the sequence is MAEDFGFFSS…TVNGDVFQEA (80 aa). 2 positions are modified to phosphoserine: Ser11 and Ser13. The involved in binding clathrin heavy chain stretch occupies residues 93–155; that stretch reads ADRLTQEPES…QVEKNKINNR (63 aa). A Phosphothreonine modification is found at Thr187. Residues Cys199 and Cys209 are joined by a disulfide bond. The residue at position 204 (Lys204) is an N6-acetyllysine. The residue at position 217 (Ser217) is a Phosphoserine.

Belongs to the clathrin light chain family. Clathrin coats are formed from molecules containing 3 heavy chains and 3 light chains. Interacts (via N-terminus) with HIP1. Interacts with HIP1R.

It localises to the cytoplasmic vesicle membrane. The protein localises to the membrane. Its subcellular location is the coated pit. In terms of biological role, clathrin is the major protein of the polyhedral coat of coated pits and vesicles. This Rattus norvegicus (Rat) protein is Clathrin light chain B (Cltb).